Reading from the N-terminus, the 444-residue chain is Acyl-CoA 6-desaturase (444 aa).

Over 1–131 (MGKGGNQGEG…DMNLFKTNHV (131 aa)) the chain is Cytoplasmic. A Cytochrome b5 heme-binding domain is found at 18 to 95 (VPTFSWEEIQ…LKPLLIGELA (78 aa)). The helical transmembrane segment at 132 to 152 (FFLLLLAHIIALESIAWFTVF) threads the bilayer. The Lumenal segment spans residues 153 to 157 (YFGNG). Residues 158 to 178 (WISTLITAFVLATSQAQAGWL) traverse the membrane as a helical segment. Topologically, residues 179-264 (QHDYGHLSVY…KYLPYNHQHE (86 aa)) are cytoplasmic. The short motif at 180-184 (HDYGH) is the Histidine box-1 element. The Histidine box-2 motif lies at 217 to 221 (HFQHH). Residues 265-285 (YFFLIGPPLLIPMYFQYQIIM) traverse the membrane as a helical segment. The Lumenal segment spans residues 286 to 305 (TMIVHKNWVDLAWAISYYIR). The helical transmembrane segment at 306–326 (FFITYIPFYGILGALLFLNFI) threads the bilayer. The Cytoplasmic segment spans residues 327-444 (RFLESHWFVW…KLWLDAYLHK (118 aa)). The Histidine box-3 signature appears at 382–386 (QIEHH).

It belongs to the fatty acid desaturase type 1 family.

It is found in the endoplasmic reticulum membrane. It catalyses the reaction (9Z,12Z)-octadecadienoyl-CoA + 2 Fe(II)-[cytochrome b5] + O2 + 2 H(+) = (6Z,9Z,12Z)-octadecatrienoyl-CoA + 2 Fe(III)-[cytochrome b5] + 2 H2O. The catalysed reaction is (9Z,12Z,15Z)-octadecatrienoyl-CoA + 2 Fe(II)-[cytochrome b5] + O2 + 2 H(+) = (6Z,9Z,12Z,15Z)-octadecatetraenoyl-CoA + 2 Fe(III)-[cytochrome b5] + 2 H2O. The enzyme catalyses (9Z,12Z,15Z,18Z,21Z)-tetracosapentaenoyl-CoA + 2 Fe(II)-[cytochrome b5] + O2 + 2 H(+) = (6Z,9Z,12Z,15Z,18Z,21Z)-tetracosahexaenoyl-CoA + 2 Fe(III)-[cytochrome b5] + 2 H2O. It carries out the reaction (11E)-octadecenoyl-CoA + 2 Fe(II)-[cytochrome b5] + O2 + 2 H(+) = (6Z,11E)-octadecadienoyl-CoA + 2 Fe(III)-[cytochrome b5] + 2 H2O. It catalyses the reaction (11Z,14Z)-eicosadienoyl-CoA + 2 Fe(II)-[cytochrome b5] + O2 + 2 H(+) = (8Z,11Z,14Z)-eicosatrienoyl-CoA + 2 Fe(III)-[cytochrome b5] + 2 H2O. The catalysed reaction is (11Z,14Z,17Z)-eicosatrienoyl-CoA + 2 Fe(II)-[cytochrome b5] + O2 + 2 H(+) = (8Z,11Z,14Z,17Z)-eicosatetraenoyl-CoA + 2 Fe(III)-[cytochrome b5] + 2 H2O. The protein operates within lipid metabolism; polyunsaturated fatty acid biosynthesis. In terms of biological role, involved in the biosynthesis of highly unsaturated fatty acids (HUFA) from the essential polyunsaturated fatty acids (PUFA) linoleic acid (LA) (18:2n-6) and alpha-linolenic acid (ALA) (18:3n-3) precursors, acting as a fatty acyl-coenzyme A (CoA) desaturase that introduces a cis double bond at carbon 6 of the fatty acyl chain. Catalyzes the first and rate limiting step in this pathway which is the desaturation of LA (18:2n-6) and ALA (18:3n-3) into gamma-linoleate (GLA) (18:3n-6) and stearidonate (18:4n-3), respectively. Subsequently, in the biosynthetic pathway of HUFA n-3 series, it desaturates tetracosapentaenoate (24:5n-3) to tetracosahexaenoate (24:6n-3), which is then converted to docosahexaenoate (DHA)(22:6n-3), an important lipid for nervous system function. It can also desaturate (11E)-octadecenoate (trans-vaccenoate) at carbon 6 generating (6Z,11E)-octadecadienoate. In addition to Delta-6 activity, this enzyme exhibits Delta-8 activity with slight biases toward n-3 fatty acyl-CoA substrates. The protein is Acyl-CoA 6-desaturase (FADS2) of Pongo abelii (Sumatran orangutan).